Here is a 434-residue protein sequence, read N- to C-terminus: D-amino acid dehydrogenase (434 aa).

3–17 is a binding site for FAD; the sequence is VLVLGSGVIGTTSAW.

The protein belongs to the DadA oxidoreductase family. It depends on FAD as a cofactor.

It carries out the reaction a D-alpha-amino acid + A + H2O = a 2-oxocarboxylate + AH2 + NH4(+). Its pathway is amino-acid degradation; D-alanine degradation; NH(3) and pyruvate from D-alanine: step 1/1. In terms of biological role, oxidative deamination of D-amino acids. This Stenotrophomonas maltophilia (strain R551-3) protein is D-amino acid dehydrogenase.